Consider the following 313-residue polypeptide: Protein phosphatase PTC7 homolog fig (313 aa).

A PPM-type phosphatase domain is found at 47 to 307 (KEPLTDLQLR…DDITVILASL (261 aa)). Mn(2+)-binding residues include Asp-83, Gly-84, and Asp-229.

The protein belongs to the PP2C family. Requires Mg(2+) as cofactor. It depends on Mn(2+) as a cofactor.

The catalysed reaction is O-phospho-L-seryl-[protein] + H2O = L-seryl-[protein] + phosphate. It carries out the reaction O-phospho-L-threonyl-[protein] + H2O = L-threonyl-[protein] + phosphate. The chain is Protein phosphatase PTC7 homolog fig from Drosophila virilis (Fruit fly).